The following is a 328-amino-acid chain: Homeobox protein Hox-D1 (328 aa).

The Antp-type hexapeptide motif lies at threonine 204–lysine 209. The homeobox DNA-binding region spans serine 229 to glutamate 288. A disordered region spans residues proline 305–serine 328. Residues glycine 319–serine 328 show a composition bias toward polar residues.

This sequence belongs to the Antp homeobox family. Labial subfamily.

The protein resides in the nucleus. Functionally, sequence-specific transcription factor which is part of a developmental regulatory system that provides cells with specific positional identities on the anterior-posterior axis. Acts on the anterior body structures. This chain is Homeobox protein Hox-D1 (HOXD1), found in Homo sapiens (Human).